A 336-amino-acid polypeptide reads, in one-letter code: Aspartate carbamoyltransferase catalytic subunit (336 aa).

Carbamoyl phosphate contacts are provided by R72 and T73. Residue K100 coordinates L-aspartate. Carbamoyl phosphate contacts are provided by R122, H155, and Q158. Residues R188 and R242 each contribute to the L-aspartate site. Residues G288 and P289 each coordinate carbamoyl phosphate.

Belongs to the aspartate/ornithine carbamoyltransferase superfamily. ATCase family. In terms of assembly, heterododecamer (2C3:3R2) of six catalytic PyrB chains organized as two trimers (C3), and six regulatory PyrI chains organized as three dimers (R2).

It catalyses the reaction carbamoyl phosphate + L-aspartate = N-carbamoyl-L-aspartate + phosphate + H(+). The protein operates within pyrimidine metabolism; UMP biosynthesis via de novo pathway; (S)-dihydroorotate from bicarbonate: step 2/3. Functionally, catalyzes the condensation of carbamoyl phosphate and aspartate to form carbamoyl aspartate and inorganic phosphate, the committed step in the de novo pyrimidine nucleotide biosynthesis pathway. The polypeptide is Aspartate carbamoyltransferase catalytic subunit (Lactobacillus leichmannii).